Reading from the N-terminus, the 136-residue chain is Protein NrdI (136 aa).

It belongs to the NrdI family.

Probably involved in ribonucleotide reductase function. The polypeptide is Protein NrdI (Klebsiella pneumoniae (strain 342)).